The sequence spans 20 residues: U27-ctenitoxin-Pn1a (20 aa).

Residues Leu-1–Thr-20 form a disordered region. The span at Gly-11 to Thr-20 shows a compositional bias: polar residues.

Post-translationally, contains 4 disulfide bonds. Expressed by the venom gland.

The protein localises to the secreted. In terms of biological role, has a vascular smooth muscle contracting activity. Causes short-lived contractions of both arterial and venous rabbit vessels. In Phoneutria nigriventer (Brazilian armed spider), this protein is U27-ctenitoxin-Pn1a.